A 139-amino-acid polypeptide reads, in one-letter code: Histone H3-like 5 (139 aa).

Polar residues predominate over residues 1–10; the sequence is MARTKQTARI. The interval 1–43 is disordered; that stretch reads MARTKQTARISTGGKAPRKQLAPKAARQSAPATGGVKKPHRFR. Lys5 carries the N6,N6,N6-trimethyllysine; alternate modification. Lys5 is modified (N6,N6-dimethyllysine; alternate). Lys5 bears the N6-methyllysine; alternate mark. At Ser11 the chain carries Phosphoserine. Residue Thr12 is modified to Phosphothreonine. Lys15 is subject to N6-acetyllysine. N6-methyllysine; alternate is present on residues Lys19 and Lys24. An N6-acetyllysine; alternate mark is found at Lys19 and Lys24. Ser29 bears the Phosphoserine mark. Lys37 is subject to N6,N6,N6-trimethyllysine; alternate. Residue Lys37 is modified to N6,N6-dimethyllysine; alternate. Residue Lys37 is modified to N6-methyllysine; alternate.

This sequence belongs to the histone H3 family. As to quaternary structure, the nucleosome is a histone octamer containing two molecules each of H2A, H2B, H3 and H4 assembled in one H3-H4 heterotetramer and two H2A-H2B heterodimers. The octamer wraps approximately 147 bp of DNA.

It localises to the nucleus. Its subcellular location is the chromosome. Functionally, core component of nucleosome. Nucleosomes wrap and compact DNA into chromatin, limiting DNA accessibility to the cellular machineries which require DNA as a template. Histones thereby play a central role in transcription regulation, DNA repair, DNA replication and chromosomal stability. DNA accessibility is regulated via a complex set of post-translational modifications of histones, also called histone code, and nucleosome remodeling. The protein is Histone H3-like 5 of Arabidopsis thaliana (Mouse-ear cress).